The following is a 271-amino-acid chain: Formamidopyrimidine-DNA glycosylase (271 aa).

Residue P2 is the Schiff-base intermediate with DNA of the active site. The active-site Proton donor is E3. Residue K58 is the Proton donor; for beta-elimination activity of the active site. DNA is bound by residues H91, R110, and R152. The segment at 237–271 adopts an FPG-type zinc-finger fold; the sequence is RAYGRGGQPCTVCQTELKEIKLGQRTSVFCPSCQR. R261 acts as the Proton donor; for delta-elimination activity in catalysis.

It belongs to the FPG family. In terms of assembly, monomer. Requires Zn(2+) as cofactor.

It catalyses the reaction Hydrolysis of DNA containing ring-opened 7-methylguanine residues, releasing 2,6-diamino-4-hydroxy-5-(N-methyl)formamidopyrimidine.. The catalysed reaction is 2'-deoxyribonucleotide-(2'-deoxyribose 5'-phosphate)-2'-deoxyribonucleotide-DNA = a 3'-end 2'-deoxyribonucleotide-(2,3-dehydro-2,3-deoxyribose 5'-phosphate)-DNA + a 5'-end 5'-phospho-2'-deoxyribonucleoside-DNA + H(+). Functionally, involved in base excision repair of DNA damaged by oxidation or by mutagenic agents. Acts as a DNA glycosylase that recognizes and removes damaged bases. Has a preference for oxidized purines, such as 7,8-dihydro-8-oxoguanine (8-oxoG). Has AP (apurinic/apyrimidinic) lyase activity and introduces nicks in the DNA strand. Cleaves the DNA backbone by beta-delta elimination to generate a single-strand break at the site of the removed base with both 3'- and 5'-phosphates. The chain is Formamidopyrimidine-DNA glycosylase from Hahella chejuensis (strain KCTC 2396).